The chain runs to 317 residues: Acetyl-coenzyme A carboxylase carboxyl transferase subunit alpha (317 aa).

One can recognise a CoA carboxyltransferase C-terminal domain in the interval 33 to 294 (NLDDEIARLQ…KQRLLDDLKE (262 aa)).

The protein belongs to the AccA family. In terms of assembly, acetyl-CoA carboxylase is a heterohexamer composed of biotin carboxyl carrier protein (AccB), biotin carboxylase (AccC) and two subunits each of ACCase subunit alpha (AccA) and ACCase subunit beta (AccD).

It localises to the cytoplasm. The enzyme catalyses N(6)-carboxybiotinyl-L-lysyl-[protein] + acetyl-CoA = N(6)-biotinyl-L-lysyl-[protein] + malonyl-CoA. It functions in the pathway lipid metabolism; malonyl-CoA biosynthesis; malonyl-CoA from acetyl-CoA: step 1/1. Its function is as follows. Component of the acetyl coenzyme A carboxylase (ACC) complex. First, biotin carboxylase catalyzes the carboxylation of biotin on its carrier protein (BCCP) and then the CO(2) group is transferred by the carboxyltransferase to acetyl-CoA to form malonyl-CoA. This is Acetyl-coenzyme A carboxylase carboxyl transferase subunit alpha from Pasteurella multocida (strain Pm70).